The chain runs to 723 residues: Catalase-peroxidase (723 aa).

Residues 98-226 (WHAAGSYRAA…LAAVQMGLIY (129 aa)) constitute a cross-link (tryptophyl-tyrosyl-methioninium (Trp-Tyr) (with M-252)). Histidine 99 (proton acceptor) is an active-site residue. Residues 226–252 (YVNPEGVNGKPDPLKTAAQVRETFARM) constitute a cross-link (tryptophyl-tyrosyl-methioninium (Tyr-Met) (with W-98)). Histidine 267 is a heme b binding site. The interval 267–286 (HTVGKTHGNGRAENLGPSPE) is disordered.

The protein belongs to the peroxidase family. Peroxidase/catalase subfamily. As to quaternary structure, homodimer or homotetramer. Requires heme b as cofactor. In terms of processing, formation of the three residue Trp-Tyr-Met cross-link is important for the catalase, but not the peroxidase activity of the enzyme.

It carries out the reaction H2O2 + AH2 = A + 2 H2O. The enzyme catalyses 2 H2O2 = O2 + 2 H2O. Its function is as follows. Bifunctional enzyme with both catalase and broad-spectrum peroxidase activity. The polypeptide is Catalase-peroxidase (Thioalkalivibrio sulfidiphilus (strain HL-EbGR7)).